Reading from the N-terminus, the 147-residue chain is MANLLVIHGPNLNLLGTREPKYYGSITLEAINSNLTHQAAQAGHHLTCFQANAEHILIEQIHSAAHQDIAFIIINPAAFTHTSIALRDALAAVAIPFIEVHLSNVHRREAFRRHSYFSDIAEGVISGLGPTGYELALQAVFARLLPP.

The active-site Proton acceptor is the Tyr-23. 3 residues coordinate substrate: Asn-75, His-81, and Asp-88. The Proton donor role is filled by His-101. Residues 102-103 (LS) and Arg-112 each bind substrate.

Belongs to the type-II 3-dehydroquinase family. As to quaternary structure, homododecamer.

It catalyses the reaction 3-dehydroquinate = 3-dehydroshikimate + H2O. The protein operates within metabolic intermediate biosynthesis; chorismate biosynthesis; chorismate from D-erythrose 4-phosphate and phosphoenolpyruvate: step 3/7. Catalyzes a trans-dehydration via an enolate intermediate. The sequence is that of 3-dehydroquinate dehydratase from Nitrosococcus oceani (strain ATCC 19707 / BCRC 17464 / JCM 30415 / NCIMB 11848 / C-107).